The following is a 293-amino-acid chain: Protease HtpX (293 aa).

The next 2 membrane-spanning stretches (helical) occupy residues 4–24 (IALF…VLSL) and 34–54 (GLMI…LLMS). Histidine 139 contacts Zn(2+). The active site involves glutamate 140. Histidine 143 is a binding site for Zn(2+). 2 helical membrane-spanning segments follow: residues 158–178 (IVNT…AGFL) and 193–213 (MVYF…ASII). Residue glutamate 222 coordinates Zn(2+).

It belongs to the peptidase M48B family. The cofactor is Zn(2+).

The protein resides in the cell inner membrane. The polypeptide is Protease HtpX (Yersinia enterocolitica serotype O:8 / biotype 1B (strain NCTC 13174 / 8081)).